Consider the following 424-residue polypeptide: Adenylosuccinate synthetase (424 aa).

GTP-binding positions include 12-18 (GDEGKGK) and 40-42 (GHT). The Proton acceptor role is filled by aspartate 13. Aspartate 13 and glycine 40 together coordinate Mg(2+). IMP is bound by residues 13-16 (DEGK), 38-41 (NAGH), threonine 130, arginine 144, asparagine 220, threonine 235, and arginine 299. Histidine 41 serves as the catalytic Proton donor. Position 295–301 (295–301 (VTTGRRR)) interacts with substrate. GTP is bound by residues arginine 301, 327–329 (KLD), and 412–414 (GTG).

It belongs to the adenylosuccinate synthetase family. In terms of assembly, homodimer. It depends on Mg(2+) as a cofactor.

The protein localises to the cytoplasm. The enzyme catalyses IMP + L-aspartate + GTP = N(6)-(1,2-dicarboxyethyl)-AMP + GDP + phosphate + 2 H(+). The protein operates within purine metabolism; AMP biosynthesis via de novo pathway; AMP from IMP: step 1/2. Its function is as follows. Plays an important role in the de novo pathway and in the salvage pathway of purine nucleotide biosynthesis. Catalyzes the first committed step in the biosynthesis of AMP from IMP. This Aspergillus niger (strain ATCC MYA-4892 / CBS 513.88 / FGSC A1513) protein is Adenylosuccinate synthetase.